A 224-amino-acid chain; its full sequence is Peptidyl-prolyl cis-trans isomerase CYP21-1 (224 aa).

The signal sequence occupies residues M1–A27. Residues F50–E214 form the PPIase cyclophilin-type domain. A glycan (N-linked (GlcNAc...) asparagine) is linked at N158.

The protein belongs to the cyclophilin-type PPIase family. As to expression, ubiquitous.

It is found in the endoplasmic reticulum. The enzyme catalyses [protein]-peptidylproline (omega=180) = [protein]-peptidylproline (omega=0). Its function is as follows. PPIases accelerate the folding of proteins. It catalyzes the cis-trans isomerization of proline imidic peptide bonds in oligopeptides. This chain is Peptidyl-prolyl cis-trans isomerase CYP21-1 (CYP21-1), found in Arabidopsis thaliana (Mouse-ear cress).